The primary structure comprises 216 residues: Kynurenine formamidase (216 aa).

Position 24 (W24) interacts with substrate. The Zn(2+) site is built by H54, H58, and D60. H64 serves as the catalytic Proton donor/acceptor. 2 residues coordinate Zn(2+): H164 and E176.

The protein belongs to the Cyclase 1 superfamily. KynB family. As to quaternary structure, homodimer. Zn(2+) is required as a cofactor.

The enzyme catalyses N-formyl-L-kynurenine + H2O = L-kynurenine + formate + H(+). It participates in amino-acid degradation; L-tryptophan degradation via kynurenine pathway; L-kynurenine from L-tryptophan: step 2/2. Catalyzes the hydrolysis of N-formyl-L-kynurenine to L-kynurenine, the second step in the kynurenine pathway of tryptophan degradation. This is Kynurenine formamidase from Erythrobacter litoralis (strain HTCC2594).